Reading from the N-terminus, the 221-residue chain is Chalcone--flavanone isomerase (221 aa).

The substrate site is built by threonine 52, asparagine 117, and serine 193.

The protein belongs to the chalcone isomerase family. As to expression, flowers.

It carries out the reaction a chalcone = a flavanone.. The protein operates within secondary metabolite biosynthesis; flavonoid biosynthesis. In terms of biological role, catalyzes the intramolecular cyclization of bicyclic chalcones into tricyclic (S)-flavanones. Responsible for the isomerization of 4,2',4',6'-tetrahydroxychalcone (also termed chalcone) into naringenin. In Gentiana triflora (Clustered gentian), this protein is Chalcone--flavanone isomerase (CHI).